We begin with the raw amino-acid sequence, 319 residues long: MYAERSSNLSIHEFWRRKSSKYMKTIKSEHLFVNHTCWYEETPETKKRNRXHRHRSSVKSIQSLEPSVNGSDSFYASYVDGYDLKRKFIVVETLTSEKKSRNYWKLIWETNCRVIVRFDINDWKNCQYWLHNHISDYTEGEFNVWKKKTISHNYYTEILLTVANKKNGKSKQITHYEYHEHPDGKLPIESARFIFFLKMVNKSQENYNISASSSNKCARTPIVVHSVGRYERAISFCALDICLNQIRETKSVSVPSVLLKIKGQTQLDFFSFEEYLIINKILLHSKWALELKTEDDGKTSFFRSRVRKYCLIFKRASVF.

A Tyrosine-protein phosphatase domain is found at 7–285 (SNLSIHEFWR…LIINKILLHS (279 aa)).

The protein belongs to the protein-tyrosine phosphatase family.

In Microplitis demolitor bracovirus (isolate Webb) (MdBV), this protein is Tyrosine phosphatase-like protein N3 (N7).